Reading from the N-terminus, the 127-residue chain is UPF0212 protein VNG_1264C (127 aa).

It belongs to the UPF0212 family.

The polypeptide is UPF0212 protein VNG_1264C (Halobacterium salinarum (strain ATCC 700922 / JCM 11081 / NRC-1) (Halobacterium halobium)).